Consider the following 319-residue polypeptide: Malate dehydrogenase (319 aa).

NAD(+) is bound by residues 10–15 (GAGNIG) and Asp-34. 2 residues coordinate substrate: Arg-83 and Arg-89. Residues Asn-96 and 119-121 (ITN) contribute to the NAD(+) site. The substrate site is built by Asn-121 and Arg-152. The active-site Proton acceptor is the His-176.

Belongs to the LDH/MDH superfamily. MDH type 3 family.

It catalyses the reaction (S)-malate + NAD(+) = oxaloacetate + NADH + H(+). Catalyzes the reversible oxidation of malate to oxaloacetate. The polypeptide is Malate dehydrogenase (Francisella tularensis subsp. mediasiatica (strain FSC147)).